A 294-amino-acid chain; its full sequence is HTH-type transcriptional regulator DgdR (294 aa).

The region spanning 14–70 (LEIDLLRSFVVIAEVRALSRAAARVGRTQSALSQQMKRLEDIVDQPLFQRTGRGVVL) is the HTH lysR-type domain. The segment at residues 31-50 (LSRAAARVGRTQSALSQQMK) is a DNA-binding region (H-T-H motif).

This sequence belongs to the LysR transcriptional regulatory family.

This chain is HTH-type transcriptional regulator DgdR (dgdR), found in Burkholderia cepacia (Pseudomonas cepacia).